The following is a 385-amino-acid chain: Beta-lactamase (385 aa).

The first 20 residues, 1–20 (MKRLLAFCLLFFAALGQAKV), serve as a signal peptide directing secretion. The active-site Acyl-ester intermediate is the Ser84. Tyr170 (proton acceptor) is an active-site residue. Residue 335–337 (KTG) participates in substrate binding.

It belongs to the class-C beta-lactamase family.

It is found in the periplasm. It carries out the reaction a beta-lactam + H2O = a substituted beta-amino acid. Its function is as follows. This protein is a serine beta-lactamase with a substrate specificity for cephalosporins. The sequence is that of Beta-lactamase from Lysobacter lactamgenus.